The following is a 157-amino-acid chain: Globin (157 aa).

Gly1 is subject to N-acetylglycine. One can recognise a Globin domain in the interval 8–155; that stretch reads SLSADQKAAI…MANIIDAEQK (148 aa). Heme b is bound by residues His70 and His102.

Belongs to the globin family. As to quaternary structure, monomer.

This chain is Globin, found in Nerita albicilla (Ox-palate nerite).